A 113-amino-acid chain; its full sequence is DNA-directed RNA polymerase subunit Rpo4 (113 aa).

This sequence belongs to the eukaryotic RPB4 RNA polymerase subunit family. As to quaternary structure, part of the 13-subunit RNA polymerase complex. Forms a stalk with Rpo7 that extends from the main structure.

The protein localises to the cytoplasm. It catalyses the reaction RNA(n) + a ribonucleoside 5'-triphosphate = RNA(n+1) + diphosphate. In terms of biological role, DNA-dependent RNA polymerase (RNAP) catalyzes the transcription of DNA into RNA using the four ribonucleoside triphosphates as substrates. This subunit is less well bound than the others. The protein is DNA-directed RNA polymerase subunit Rpo4 of Saccharolobus solfataricus (strain ATCC 35092 / DSM 1617 / JCM 11322 / P2) (Sulfolobus solfataricus).